Consider the following 2586-residue polypeptide: Vitellogenin (2586 aa).

The N-terminal stretch at 1–18 is a signal peptide; it reads MTTSTLLFVLAFVAGGLA. In terms of domain architecture, Vitellogenin spans 42-653; it reads YQPDKTYAYA…APGSFVPRAV (612 aa). Cystine bridges form between cysteine 170/cysteine 194 and cysteine 2378/cysteine 2515. The region spanning 2353–2516 is the VWFD domain; the sequence is RTATVVGGSE…AAWQEDRQCS (164 aa).

In terms of processing, glycosylated. Post-translationally, may be modified covalently by lipidation. As to expression, expressed in the ovary and hepatopancrease of vitellogenic females. Not expressed in the muscle, heart and intestine of female or in the hepatopancrease of the male. Detected in the ovary and hemolymph of female (at protein level). Not detected in the female hepatopancreas or in the male hemolymph and testis (at protein level).

Functionally, precursor of the egg-yolk proteins that are sources of nutrients during embryonic development. This is Vitellogenin from Penaeus merguiensis (Banana prawn).